A 165-amino-acid polypeptide reads, in one-letter code: Methylated-DNA--protein-cysteine methyltransferase (165 aa).

The active-site Nucleophile; methyl group acceptor is Cys126.

This sequence belongs to the MGMT family.

It is found in the cytoplasm. The enzyme catalyses a 6-O-methyl-2'-deoxyguanosine in DNA + L-cysteinyl-[protein] = S-methyl-L-cysteinyl-[protein] + a 2'-deoxyguanosine in DNA. The catalysed reaction is a 4-O-methyl-thymidine in DNA + L-cysteinyl-[protein] = a thymidine in DNA + S-methyl-L-cysteinyl-[protein]. Its function is as follows. Involved in the cellular defense against the biological effects of O6-methylguanine (O6-MeG) and O4-methylthymine (O4-MeT) in DNA. Repairs the methylated nucleobase in DNA by stoichiometrically transferring the methyl group to a cysteine residue in the enzyme. This is a suicide reaction: the enzyme is irreversibly inactivated. The chain is Methylated-DNA--protein-cysteine methyltransferase from Mycolicibacterium paratuberculosis (strain ATCC BAA-968 / K-10) (Mycobacterium paratuberculosis).